We begin with the raw amino-acid sequence, 132 residues long: Small ribosomal subunit protein uS8 (132 aa).

Belongs to the universal ribosomal protein uS8 family. Part of the 30S ribosomal subunit. Contacts proteins S5 and S12.

Functionally, one of the primary rRNA binding proteins, it binds directly to 16S rRNA central domain where it helps coordinate assembly of the platform of the 30S subunit. This chain is Small ribosomal subunit protein uS8, found in Levilactobacillus brevis (strain ATCC 367 / BCRC 12310 / CIP 105137 / JCM 1170 / LMG 11437 / NCIMB 947 / NCTC 947) (Lactobacillus brevis).